The chain runs to 62 residues: Cytochrome b-c1 complex subunit 6-2, mitochondrial (62 aa).

Disulfide bonds link cysteine 17–cysteine 59 and cysteine 31–cysteine 45.

This sequence belongs to the UQCRH/QCR6 family. As to quaternary structure, component of the ubiquinol-cytochrome c oxidoreductase (cytochrome b-c1 complex, complex III, CIII), a multisubunit enzyme composed of 10 subunits. The complex is composed of 3 respiratory subunits cytochrome b (MT-CYB), cytochrome c1 (CYC1-1 or CYC1-2) and Rieske protein (UCR1-1 or UCR1-2), 2 core protein subunits MPPalpha1 (or MPPalpha2) and MPPB, and 5 low-molecular weight protein subunits QCR7-1 (or QCR7-2), UCRQ-1 (or UCRQ-2), QCR9, UCRY and probably QCR6-1 (or QCR6-2). The complex exists as an obligatory dimer and forms supercomplexes (SCs) in the inner mitochondrial membrane with NADH-ubiquinone oxidoreductase (complex I, CI), resulting in different assemblies (supercomplexes SCI(1)III(2) and SCI(2)III(4)).

Its subcellular location is the mitochondrion inner membrane. Component of the ubiquinol-cytochrome c oxidoreductase, a multisubunit transmembrane complex that is part of the mitochondrial electron transport chain which drives oxidative phosphorylation. The respiratory chain contains 3 multisubunit complexes succinate dehydrogenase (complex II, CII), ubiquinol-cytochrome c oxidoreductase (cytochrome b-c1 complex, complex III, CIII) and cytochrome c oxidase (complex IV, CIV), that cooperate to transfer electrons derived from NADH and succinate to molecular oxygen, creating an electrochemical gradient over the inner membrane that drives transmembrane transport and the ATP synthase. The cytochrome b-c1 complex catalyzes electron transfer from ubiquinol to cytochrome c, linking this redox reaction to translocation of protons across the mitochondrial inner membrane, with protons being carried across the membrane as hydrogens on the quinol. In the process called Q cycle, 2 protons are consumed from the matrix, 4 protons are released into the intermembrane space and 2 electrons are passed to cytochrome c. This Arabidopsis thaliana (Mouse-ear cress) protein is Cytochrome b-c1 complex subunit 6-2, mitochondrial (QCR6-2).